Consider the following 376-residue polypeptide: MKNSIPIDLIIEIVSRSTAKSVARCHCVSKQWRAIFRRKYFIELFLTRSKARPRILFVVQDGEWSEWSFLSLPQPQNSSLVVESADIHMKKFSAGISGSIYFTYASGLIYFKCMRIPKEDEDEKPVLCDPLTGKYVILPEPRVFGMYSYLGFDPVDKEFKVLFMASGYTASKDVDHYILTLRTGELKWRTIQCPFTHEPLWTRICINGVLYYSAMNSDGNYVIVCFDVRYEKFKLVDTKCRSEFNGLINYKGKLCGVKLKYAYRVGFPVKLRMRVLEDVEKDEWSTYVKVKVKQNLSVAGMTATGDIVLFMKFASNPFYVFYFNPERNSLEVQSVEIQGLGANPDRIACNAFVDYVEDLSVNDAMLQLNSIPLQQD.

Residues 1–44 (MKNSIPIDLIIEIVSRSTAKSVARCHCVSKQWRAIFRRKYFIEL) form the F-box domain.

In Arabidopsis thaliana (Mouse-ear cress), this protein is Putative F-box protein At1g30930.